A 383-amino-acid polypeptide reads, in one-letter code: MRLLSFKKSKIVSIGTELEFQIIDRSSLSLVSRSKELMRALKDMRYRDQIKPEITQSMIEINSSIHQSAKEMYDELLELQKILVETAASIDIAFCGGGTHPFQQWTMQKIFPSKRFKKKFNQYRYLSKRATVFGQHIHIGCPTGDDAIYLTHALARYVPHFIAISASSPFYLGINTNYCSSRSTIFNAFPLSGVIPYLRNWQEFSDYYRKMYRWKIIENMKDFYWDIRPKPELGTIEIRVCDTPLTLRKSILITAYIQALALYLLKEKPVQLSHDLYYVYNYNRFQASRHGLEGELTVTDKDKPILIMDDILETIKKIEQYINGLGNSEYIEELYSDVINKQNDSVLINKIYKQDGSFTKLVAAQCELWLSDSKDRKWMTQPS.

Belongs to the glutamate--cysteine ligase type 2 family. YbdK subfamily.

It carries out the reaction L-cysteine + L-glutamate + ATP = gamma-L-glutamyl-L-cysteine + ADP + phosphate + H(+). Its function is as follows. ATP-dependent carboxylate-amine ligase which exhibits weak glutamate--cysteine ligase activity. The protein is Putative glutamate--cysteine ligase 2-1 of Legionella pneumophila (strain Corby).